The primary structure comprises 314 residues: Pantothenate kinase (314 aa).

ATP is bound at residue 93–100 (GSVAVGKS).

The protein belongs to the prokaryotic pantothenate kinase family.

It localises to the cytoplasm. It carries out the reaction (R)-pantothenate + ATP = (R)-4'-phosphopantothenate + ADP + H(+). Its pathway is cofactor biosynthesis; coenzyme A biosynthesis; CoA from (R)-pantothenate: step 1/5. This is Pantothenate kinase from Shewanella denitrificans (strain OS217 / ATCC BAA-1090 / DSM 15013).